The sequence spans 1482 residues: Cystic fibrosis transmembrane conductance regulator (1482 aa).

The Cytoplasmic portion of the chain corresponds to 1–77 (MQRSPLEKAS…KLINALQRCF (77 aa)). A helical transmembrane segment spans residues 78 to 98 (FWRFTFYGILLYLGEVTKAIQ). Residues 81–365 (FTFYGILLYL…WAVQTWYDSL (285 aa)) enclose the ABC transmembrane type-1 1 domain. At 99–122 (PLLLGRIIASYDPDNKMERSIAIY) the chain is on the extracellular side. The chain crosses the membrane as a helical span at residues 123-146 (LGIGLCLLFIMRTLLLHPAIFGLH). Over 147–195 (HIGMQMRIALFSLIYKKTLKLSSRVLDKISIGQLVSLLSNNLNKFDEGL) the chain is Cytoplasmic. The helical transmembrane segment at 196–216 (ALAHFVWIAPLQVMLLMGLLW) threads the bilayer. Residues 217-222 (ELLQAS) lie on the Extracellular side of the membrane. The chain crosses the membrane as a helical span at residues 223 to 243 (AFCGLAFLIVLALLQAGLGRM). Over 244-298 (MMKYRDQRAGKINERLVITSEMIENIQSVKAYCWEEAMEKMIENLRQTELRLTRK) the chain is Cytoplasmic. A helical membrane pass occupies residues 299–319 (AAYVRYVNSSAFFFSGFFVVF). Over 320 to 339 (LSVLPYALIKGIILRKIFTT) the chain is Extracellular. A helical transmembrane segment spans residues 340–358 (ISFCIVLRMAVTRQFPWAV). The Cytoplasmic segment spans residues 359–859 (QTWYDSLGAI…YLRYITVHKN (501 aa)). ATP-binding positions include Trp401, 458 to 465 (GSTGAGKT), and Gln493. In terms of domain architecture, ABC transporter 1 spans 423–646 (SGDNRLFFSN…RPDFSSKLMG (224 aa)). The S-palmitoyl cysteine moiety is linked to residue Cys524. A phosphoserine mark is found at Ser549 and Ser660. The interval 654 to 832 (SAERRNSILT…EEINEEDLKE (179 aa)) is disordered R region. Phosphoserine; by PKA is present on Ser670. Residue Ser686 is modified to Phosphoserine. Lys688 participates in a covalent cross-link: Glycyl lysine isopeptide (Lys-Gly) (interchain with G-Cter in ubiquitin). Phosphoserine occurs at positions 700 and 712. Thr717 carries the phosphothreonine modification. Residues Ser737, Ser768, Ser791, Ser796, and Ser814 each carry the phosphoserine modification. A helical transmembrane segment spans residues 860–880 (LIFVLIWCLVIFLAEVAASLV). Positions 860-1156 (LIFVLIWCLV…AVNSSIDVDS (297 aa)) constitute an ABC transmembrane type-1 2 domain. Residues 881–919 (AFWLIEKTRPQDKGNSTRSTNNTSPVIITSTSAFYMFYI) are Extracellular-facing. 2 N-linked (GlcNAc...) asparagine glycosylation sites follow: Asn895 and Asn901. Residues 920 to 940 (YVGVADSLLALGFLRGLPLVH) form a discontinuously helical membrane-spanning segment. At 941–991 (TLITVSKILHQKMLHSVLHAPMSTLNTLKAGAILNRFSKDIAILDDLLPLT) the chain is on the cytoplasmic side. The chain crosses the membrane as a helical span at residues 992–1012 (IFDFIQLVLIVIGAVVVVSIL). The Extracellular portion of the chain corresponds to 1013-1014 (KP). Residues 1015–1035 (YIFLAAVPVIIAFVILRAYFL) form a helical membrane-spanning segment. Residues 1036–1096 (QTSQQLKQLE…TATWFLYLST (61 aa)) are Cytoplasmic-facing. The chain crosses the membrane as a helical span at residues 1097 to 1117 (LRWFQMRIEMIFVVFFVAVTF). The Extracellular segment spans residues 1118–1131 (ISILTTGEGEGTVG). Residues 1132-1152 (IILTLAMNIMSTLQWAVNSSI) traverse the membrane as a helical segment. Residues 1153-1482 (DVDSLMRSVS…AEEEVQDTRL (330 aa)) are Cytoplasmic-facing. Residues 1212 to 1445 (ITVKDLTAKY…KSLFQQAISP (234 aa)) enclose the ABC transporter 2 domain. ATP-binding positions include Tyr1221 and 1246–1253 (GRTGSGKS). Residues 1388–1482 (RALKQAFADC…AEEEVQDTRL (95 aa)) form an interaction with GORASP2 region. A lipid anchor (S-palmitoyl cysteine) is attached at Cys1397. Phosphoserine is present on residues Ser1446 and Ser1458. The tract at residues 1454 to 1482 (QRSSSKHRSRAQITALKEEAEEEVQDTRL) is disordered. A compositionally biased stretch (acidic residues) spans 1472-1482 (EAEEEVQDTRL). The PDZ-binding motif lies at 1480-1482 (TRL).

Belongs to the ABC transporter superfamily. ABCC family. CFTR transporter (TC 3.A.1.202) subfamily. As to quaternary structure, monomer; does not require oligomerization for channel activity. May form oligomers in the membrane. Interacts with SLC26A3, SLC26A6 and NHERF1. Interacts with SHANK2. Interacts with MYO6. Interacts (via C-terminus) with GOPC (via PDZ domain); this promotes CFTR internalization and thereby decreases channel activity. Interacts with SLC4A7 through NHERF1. Found in a complex with MYO5B and RAB11A. Interacts with ANO1. Interacts with SLC26A8. Interacts with AHCYL1; the interaction increases CFTR activity. Interacts with CSE1L. The core-glycosylated form interacts with GORASP2 (via PDZ GRASP-type 1 domain) in respone to ER stress. Interacts with MARCHF2; the interaction leads to CFTR ubiqtuitination and degradation. Interacts with ADGRG2. Post-translationally, N-glycosylated. In terms of processing, phosphorylated; cAMP treatment promotes phosphorylation and activates the channel. Dephosphorylation decreases the ATPase activity (in vitro). Phosphorylation at PKA sites activates the channel. Phosphorylation at PKC sites enhances the response to phosphorylation by PKA. Phosphorylated by AMPK; this inhibits channel activity. Ubiquitinated, leading to its degradation in the lysosome. Deubiquitination by USP10 in early endosomes enhances its endocytic recycling to the cell membrane. Ubiquitinated by RNF185 during ER stress. Ubiquitinated by MARCHF2.

It is found in the apical cell membrane. Its subcellular location is the early endosome membrane. It localises to the cell membrane. The protein resides in the recycling endosome membrane. The protein localises to the endoplasmic reticulum membrane. It is found in the nucleus. The catalysed reaction is ATP + H2O + closed Cl(-) channel = ADP + phosphate + open Cl(-) channel.. The enzyme catalyses chloride(in) = chloride(out). It carries out the reaction hydrogencarbonate(in) = hydrogencarbonate(out). It catalyses the reaction ATP + H2O = ADP + phosphate + H(+). Epithelial ion channel that plays an important role in the regulation of epithelial ion and water transport and fluid homeostasis. Mediates the transport of chloride ions across the cell membrane. Possesses an intrinsic ATPase activity and utilizes ATP to gate its channel; the passive flow of anions through the channel is gated by cycles of ATP binding and hydrolysis by the ATP-binding domains. The ion channel is also permeable to HCO(3)(-); selectivity depends on the extracellular chloride concentration. Exerts its function also by modulating the activity of other ion channels and transporters. Contributes to the regulation of the pH and the ion content of the epithelial fluid layer. Modulates the activity of the epithelial sodium channel (ENaC) complex, in part by regulating the cell surface expression of the ENaC complex. May regulate bicarbonate secretion and salvage in epithelial cells by regulating the transporter SLC4A7. Can inhibit the chloride channel activity of ANO1. Plays a role in the chloride and bicarbonate homeostasis during sperm epididymal maturation and capacitation. This chain is Cystic fibrosis transmembrane conductance regulator, found in Rhinolophus ferrumequinum (Greater horseshoe bat).